A 707-amino-acid polypeptide reads, in one-letter code: D-(-)-3-hydroxybutyrate oligomer hydrolase (707 aa).

The signal sequence occupies residues M1–A24. S311 (charge relay system) is an active-site residue.

Belongs to the D-(-)-3-hydroxybutyrate oligomer hydrolase family.

It localises to the secreted. The enzyme catalyses (3R)-hydroxybutanoate dimer + H2O = 2 (R)-3-hydroxybutanoate + H(+). Its pathway is lipid metabolism; butanoate metabolism. Its function is as follows. Participates in the degradation of poly-3-hydroxybutyrate (PHB). It works downstream of poly(3-hydroxybutyrate) depolymerase, hydrolyzing D(-)-3-hydroxybutyrate oligomers of various length (3HB-oligomers) into 3HB-monomers. The chain is D-(-)-3-hydroxybutyrate oligomer hydrolase from Cupriavidus pinatubonensis (strain JMP 134 / LMG 1197) (Cupriavidus necator (strain JMP 134)).